Here is a 212-residue protein sequence, read N- to C-terminus: Large ribosomal subunit protein mL48 (212 aa).

The N-terminal 28 residues, 1-28 (MNGALGKVLCLKNDTIFKQAFSLLRFRT), are a transit peptide targeting the mitochondrion. N6-succinyllysine is present on Lys-199.

This sequence belongs to the mitochondrion-specific ribosomal protein mL48 family. As to quaternary structure, component of the mitochondrial ribosome large subunit (39S) which comprises a 16S rRNA and about 50 distinct proteins. Interacts with OXA1L.

Its subcellular location is the mitochondrion. This chain is Large ribosomal subunit protein mL48 (MRPL48), found in Bos taurus (Bovine).